Consider the following 206-residue polypeptide: Small ribosomal subunit protein uS4 (206 aa).

Residues 98 to 155 (TRLDNVVYRLGWALSRAQARQIVSHGKIAVNGKRVNIPSYNLKPGDVVELLDKDLIPV) form the S4 RNA-binding domain.

This sequence belongs to the universal ribosomal protein uS4 family. As to quaternary structure, part of the 30S ribosomal subunit. Contacts protein S5. The interaction surface between S4 and S5 is involved in control of translational fidelity.

In terms of biological role, one of the primary rRNA binding proteins, it binds directly to 16S rRNA where it nucleates assembly of the body of the 30S subunit. Its function is as follows. With S5 and S12 plays an important role in translational accuracy. The protein is Small ribosomal subunit protein uS4 of Dictyoglomus turgidum (strain DSM 6724 / Z-1310).